Consider the following 194-residue polypeptide: Peptidyl-tRNA hydrolase (194 aa).

Tyr16 is a binding site for tRNA. Catalysis depends on His21, which acts as the Proton acceptor. Residues Phe67, Asn69, and Asn115 each contribute to the tRNA site.

This sequence belongs to the PTH family. As to quaternary structure, monomer.

The protein resides in the cytoplasm. The enzyme catalyses an N-acyl-L-alpha-aminoacyl-tRNA + H2O = an N-acyl-L-amino acid + a tRNA + H(+). Hydrolyzes ribosome-free peptidyl-tRNAs (with 1 or more amino acids incorporated), which drop off the ribosome during protein synthesis, or as a result of ribosome stalling. Its function is as follows. Catalyzes the release of premature peptidyl moieties from peptidyl-tRNA molecules trapped in stalled 50S ribosomal subunits, and thus maintains levels of free tRNAs and 50S ribosomes. The protein is Peptidyl-tRNA hydrolase of Salmonella dublin (strain CT_02021853).